The primary structure comprises 447 residues: NADH-quinone oxidoreductase subunit F (447 aa).

61-70 is an NAD(+) binding site; the sequence is GRGGAGFSTG. FMN is bound at residue 174 to 221; that stretch reads GAGRYICGEETALINSLEGRRANPRAKPPFPAVFGLWGKPTCVNNVET. [4Fe-4S] cluster is bound by residues Cys352, Cys355, Cys358, and Cys399.

Belongs to the complex I 51 kDa subunit family. In terms of assembly, composed of 13 different subunits. Subunits NuoCD, E, F, and G constitute the peripheral sector of the complex. [4Fe-4S] cluster serves as cofactor. Requires FMN as cofactor.

It carries out the reaction a quinone + NADH + 5 H(+)(in) = a quinol + NAD(+) + 4 H(+)(out). NDH-1 shuttles electrons from NADH, via FMN and iron-sulfur (Fe-S) centers, to quinones in the respiratory chain. Couples the redox reaction to proton translocation (for every two electrons transferred, four hydrogen ions are translocated across the cytoplasmic membrane), and thus conserves the redox energy in a proton gradient. The chain is NADH-quinone oxidoreductase subunit F (nuoF) from Buchnera aphidicola subsp. Schizaphis graminum (strain Sg).